The primary structure comprises 1068 residues: Cytospin-B (1068 aa).

A disordered region spans residues 1 to 221 (MRSAAKPWNP…VDGTSVSPGD (221 aa)). Residue R2 is the site of N-myristoyl glycine attachment. Positions 29 to 40 (SSGMKSSKSSTS) are enriched in low complexity. S38 and S55 each carry phosphoserine. T78 is modified (phosphothreonine). Phosphoserine is present on residues S112, S131, S134, S137, and S138. The span at 126 to 144 (SNPRKSVSSPTSSNTPTPT) shows a compositional bias: low complexity. T142 is modified (phosphothreonine). Residues 154–200 (PKQENEGGEKAALESQVRELLAEAKAKDSEINRLRSELKKYKEKRTL) show a composition bias toward basic and acidic residues. Phosphoserine is present on residues S218 and S241. 3 stretches are compositionally biased toward polar residues: residues 261-295 (PNSE…QMSS), 309-323 (LRTS…TKAS), and 337-367 (ETPS…SVSE). Residues 261-367 (PNSEGAASHT…AGSSPNSVSE (107 aa)) form a disordered region. A phosphoserine mark is found at S361, S366, S369, and S425. Residues 579 to 773 (EVQEMLKVAR…QKELGDVQGH (195 aa)) are a coiled coil. Positions 777 to 796 (VTSRAAPPPVDEEPESSEVD) are disordered. A phosphoserine mark is found at S847 and S863. Disordered regions lie at residues 859 to 885 (AAAV…TQRL) and 898 to 922 (GRTE…SRPP). Residues 866 to 875 (QRHSTYSSVR) show a composition bias toward polar residues. Basic and acidic residues predominate over residues 898 to 909 (GRTETLKPDPHL). Phosphoserine occurs at positions 912 and 914. Residues 912–922 (SPSLESLSRPP) show a composition bias toward low complexity. Positions 962 to 1067 (GSKRNALLKW…YVAQIYKYFE (106 aa)) constitute a Calponin-homology (CH) domain.

This sequence belongs to the cytospin-A family. In terms of tissue distribution, highly expressed in testis. Barely detectable in other tissues. Also highly expressed in some cancer cell lines.

It localises to the nucleus. The protein localises to the membrane. This Homo sapiens (Human) protein is Cytospin-B (SPECC1).